Consider the following 298-residue polypeptide: MLYQQIARNKRKTALIMVLFVVILTLVGAGLGYLFSNSPWTGIIIALAGSLIYLLIMWQNPANMIMSLNHAQEIQEADNPELWHIVEDMAMVARVPMPRVFIIPDPSPNAFATGRDPEHSAVAVTQGILELMNREELEGVLGHELSHVRNYDILLSTIGVVLVGVISFISGIASRYIWFFGGNRRDDEDRDTNAFEIIFKVIAIVFVLILGPISASLAQMALSRNREYLADASSVELTRNPQGLISALRKIEGSQPMRQADRSSAGLYIENPFHNHGLSHLFDTHPPTEDRIKRLEHM.

2 helical membrane-spanning segments follow: residues 15–35 (LIMV…GYLF) and 38–58 (SPWT…LIMW). His-143 provides a ligand contact to Zn(2+). Glu-144 is a catalytic residue. His-147 serves as a coordination point for Zn(2+). 2 helical membrane passes run 153–173 (ILLS…SGIA) and 197–217 (IIFK…SASL). Position 227 (Glu-227) interacts with Zn(2+).

The protein belongs to the peptidase M48B family. Requires Zn(2+) as cofactor.

It is found in the cell membrane. The chain is Protease HtpX homolog from Lactobacillus acidophilus (strain ATCC 700396 / NCK56 / N2 / NCFM).